Here is a 236-residue protein sequence, read N- to C-terminus: Small ribosomal subunit protein uS2c (236 aa).

This sequence belongs to the universal ribosomal protein uS2 family.

The protein resides in the plastid. It is found in the chloroplast. The chain is Small ribosomal subunit protein uS2c (rps2) from Triticum aestivum (Wheat).